A 165-amino-acid polypeptide reads, in one-letter code: Nucleotide-binding protein Tfu_2672 (165 aa).

This sequence belongs to the YajQ family.

Functionally, nucleotide-binding protein. This is Nucleotide-binding protein Tfu_2672 from Thermobifida fusca (strain YX).